Here is a 276-residue protein sequence, read N- to C-terminus: MHFHFSKMHGLGNDFMVVDCITQNVYFSQELIRRLADRHTGVGFDQLLVVEAPYDPETDFHYRIFNADGSEVEQCGNGARCFARFVRMKGLTNKYSISVSTKKGKMILDVEEDDQITVNMGVPEFEPNKIPFRAKQKEKTYIMRVGEKTLFCGAVSMGNPHVVTVVDDVDSAEVETLGPLLESHERFPERVNAGFMQVVNREQIRLRVYERGAGETQACGSGACGAVAVGILQGLLDENVTVSLPGGDLHIHWQGPGKPLYMTGPATHVFDGQLSC.

Positions 13, 46, and 66 each coordinate substrate. Residue cysteine 75 is the Proton donor of the active site. Substrate-binding positions include 76–77 (GN), asparagine 159, asparagine 192, and 210–211 (ER). The active-site Proton acceptor is the cysteine 219. 220–221 (GS) contacts substrate.

The protein belongs to the diaminopimelate epimerase family. In terms of assembly, homodimer.

The protein localises to the cytoplasm. The enzyme catalyses (2S,6S)-2,6-diaminopimelate = meso-2,6-diaminopimelate. Its pathway is amino-acid biosynthesis; L-lysine biosynthesis via DAP pathway; DL-2,6-diaminopimelate from LL-2,6-diaminopimelate: step 1/1. Functionally, catalyzes the stereoinversion of LL-2,6-diaminopimelate (L,L-DAP) to meso-diaminopimelate (meso-DAP), a precursor of L-lysine and an essential component of the bacterial peptidoglycan. This chain is Diaminopimelate epimerase, found in Vibrio vulnificus (strain CMCP6).